The primary structure comprises 162 residues: Class I hydrophobin dewC (162 aa).

A signal peptide spans 1–21 (MQFTIASLIATAVLGLQMASA). Cystine bridges form between Cys-43–Cys-119, Cys-50–Cys-113, Cys-51–Cys-90, and Cys-120–Cys-156.

The protein belongs to the fungal hydrophobin family. In terms of assembly, self-assembles to form functional amyloid fibrils called rodlets. Self-assembly into fibrillar rodlets occurs spontaneously at hydrophobic:hydrophilic interfaces and the rodlets further associate laterally to form amphipathic monolayers.

Its subcellular location is the secreted. The protein localises to the spore wall. Its function is as follows. Aerial growth, conidiation, and dispersal of filamentous fungi in the environment rely upon a capability of their secreting small amphipathic proteins called hydrophobins (HPBs) with low sequence identity. Class I can self-assemble into an outermost layer of rodlet bundles on aerial cell surfaces, conferring cellular hydrophobicity that supports fungal growth, development and dispersal; whereas Class II form highly ordered films at water-air interfaces through intermolecular interactions but contribute nothing to the rodlet structure. DewC is a class I hydrophobin that contributes to the hydrophobicity of the spore surface. This chain is Class I hydrophobin dewC, found in Emericella nidulans (strain FGSC A4 / ATCC 38163 / CBS 112.46 / NRRL 194 / M139) (Aspergillus nidulans).